The chain runs to 191 residues: Fe/S biogenesis protein NfuA (191 aa).

C149 and C152 together coordinate [4Fe-4S] cluster.

The protein belongs to the NfuA family. As to quaternary structure, homodimer. Requires [4Fe-4S] cluster as cofactor.

Its function is as follows. Involved in iron-sulfur cluster biogenesis. Binds a 4Fe-4S cluster, can transfer this cluster to apoproteins, and thereby intervenes in the maturation of Fe/S proteins. Could also act as a scaffold/chaperone for damaged Fe/S proteins. The chain is Fe/S biogenesis protein NfuA from Buchnera aphidicola subsp. Baizongia pistaciae (strain Bp).